We begin with the raw amino-acid sequence, 365 residues long: Spermine synthase (365 aa).

Residue Ala-2 is modified to N-acetylalanine. Ser-57 bears the Phosphoserine mark. One can recognise a PABS domain in the interval 121–361 (RYWPTADGRL…ELWVFYTVWK (241 aa)). S-adenosyl 3-(methylsulfanyl)propylamine is bound at residue Gln-147. Spermidine-binding residues include Tyr-176 and Asp-200. S-adenosyl 3-(methylsulfanyl)propylamine is bound by residues Glu-219 and 254–255 (DC). Catalysis depends on Asp-275, which acts as the Proton acceptor. Residues Tyr-350 and Glu-352 each contribute to the spermidine site.

It belongs to the spermidine/spermine synthase family. Homodimer. Dimerization is mediated through the N-terminal domain and seems to be required for activity as deletion of the N-terminal domain causes complete loss of activity.

The enzyme catalyses S-adenosyl 3-(methylsulfanyl)propylamine + spermidine = spermine + S-methyl-5'-thioadenosine + H(+). The protein operates within amine and polyamine biosynthesis; spermine biosynthesis; spermine from spermidine: step 1/1. In terms of biological role, catalyzes the production of spermine from spermidine and decarboxylated S-adenosylmethionine (dcSAM). This chain is Spermine synthase (SMS), found in Bos taurus (Bovine).